We begin with the raw amino-acid sequence, 1257 residues long: Neural cell adhesion molecule L1 (1257 aa).

The first 19 residues, 1-19, serve as a signal peptide directing secretion; that stretch reads MVVALRYVWPLLLCSPCLL. The Extracellular segment spans residues 20-1120; that stretch reads IQIPEEYEGH…RLPPAGFATE (1101 aa). Ig-like C2-type domains lie at 35 to 125, 139 to 226, 240 to 328, 333 to 420, 425 to 507, and 518 to 607; these read PVIT…TAMS, PKET…EPID, PRLL…YYVT, PYWL…AYIY, PAKI…NNVT, and TQIT…AQLL. 2 disulfide bridges follow: Cys57/Cys114 and Cys158/Cys209. 4 N-linked (GlcNAc...) asparagine glycosylation sites follow: Asn100, Asn203, Asn247, and Asn294. 2 disulfides stabilise this stretch: Cys264/Cys312 and Cys354/Cys404. N-linked (GlcNAc...) asparagine glycans are attached at residues Asn433, Asn479, Asn490, and Asn505. Cys448 and Cys497 are joined by a disulfide. The cysteines at positions 539 and 591 are disulfide-linked. Residues 554–556 carry the Cell attachment site motif; sequence RGD. 2 N-linked (GlcNAc...) asparagine glycosylation sites follow: Asn588 and Asn671. Fibronectin type-III domains follow at residues 615–712, 717–810, 814–916, 920–1015, and 1016–1115; these read VPRL…TPEA, NPVD…SGED, AIPE…TPEG, HPEA…MALS, and GISD…LPPA. Residues 698–725 form a disordered region; sequence GEPSPVSETVVTPEAAPEKNPVDVKGEG. Basic and acidic residues predominate over residues 713-725; it reads APEKNPVDVKGEG. 10 N-linked (GlcNAc...) asparagine glycosylation sites follow: Asn726, Asn777, Asn825, Asn849, Asn876, Asn979, Asn1022, Asn1030, Asn1071, and Asn1105. A helical transmembrane segment spans residues 1121–1143; sequence GWFIGFVSAIILLLLVLLILCFI. Over 1144 to 1257 the chain is Cytoplasmic; that stretch reads KRSKGGKYSV…SPINPAVALE (114 aa). Phosphoserine is present on residues Ser1163, Thr1172, Arg1177, and Ser1178. Residues 1176 to 1187 are compositionally biased toward basic and acidic residues; the sequence is YRSLESDNEEKA. 2 disordered regions span residues 1176-1207 and 1226-1257; these read YRSLESDNEEKAFGSSQPSLNGDIKPLGSDDS and IGQYSGKKEKEAAGGNDSSGATSPINPAVALE. At Ser1181 the chain carries Phosphoserine; by CaMK2. Phosphoserine is present on residues Ser1194, Ser1243, Ser1244, and Ser1248. The segment covering 1241–1250 has biased composition (polar residues); that stretch reads NDSSGATSPI.

It belongs to the immunoglobulin superfamily. L1/neurofascin/NgCAM family. In terms of assembly, interacts with SHTN1; the interaction occurs in axonal growth cones. Interacts with isoform 2 of BSG.

Its subcellular location is the cell membrane. The protein localises to the cell projection. It is found in the growth cone. The protein resides in the axon. It localises to the dendrite. Its function is as follows. Neural cell adhesion molecule involved in the dynamics of cell adhesion and in the generation of transmembrane signals at tyrosine kinase receptors. During brain development, critical in multiple processes, including neuronal migration, axonal growth and fasciculation, and synaptogenesis. In the mature brain, plays a role in the dynamics of neuronal structure and function, including synaptic plasticity. The polypeptide is Neural cell adhesion molecule L1 (L1CAM) (Homo sapiens (Human)).